Consider the following 242-residue polypeptide: UDP-2,3-diacylglucosamine hydrolase (242 aa).

Residues Asp9, His11, Asp42, Asn79, and His114 each contribute to the Mn(2+) site. 79–80 provides a ligand contact to substrate; it reads NR. The substrate site is built by Asp122, Ser160, Asn164, Lys167, and His195. His195 and His197 together coordinate Mn(2+).

The protein belongs to the LpxH family. It depends on Mn(2+) as a cofactor.

Its subcellular location is the cell inner membrane. The catalysed reaction is UDP-2-N,3-O-bis[(3R)-3-hydroxytetradecanoyl]-alpha-D-glucosamine + H2O = 2-N,3-O-bis[(3R)-3-hydroxytetradecanoyl]-alpha-D-glucosaminyl 1-phosphate + UMP + 2 H(+). It functions in the pathway glycolipid biosynthesis; lipid IV(A) biosynthesis; lipid IV(A) from (3R)-3-hydroxytetradecanoyl-[acyl-carrier-protein] and UDP-N-acetyl-alpha-D-glucosamine: step 4/6. Its function is as follows. Hydrolyzes the pyrophosphate bond of UDP-2,3-diacylglucosamine to yield 2,3-diacylglucosamine 1-phosphate (lipid X) and UMP by catalyzing the attack of water at the alpha-P atom. Involved in the biosynthesis of lipid A, a phosphorylated glycolipid that anchors the lipopolysaccharide to the outer membrane of the cell. This chain is UDP-2,3-diacylglucosamine hydrolase, found in Shewanella loihica (strain ATCC BAA-1088 / PV-4).